The chain runs to 604 residues: uncharacterized protein (604 aa).

Residues 45–329 form the ABC transmembrane type-1 domain; it reads LPLSFLTVLI…LGQVYNQLLM (285 aa). A run of 6 helical transmembrane segments spans residues 49–69, 82–102, 162–182, 184–204, 273–293, and 297–317; these read FLTVLIGTAVKLVIPILIGVY, LLIQLIFIISGLYVLNYAANV, VINLLTDLLLLAGVIIILFTL, PELTIAIMVTLPIMFFISTSL, LVEMTNAIGTAVLIWYGATLI, and TITIGVFVSFAFYLGMFWEPI. The ABC transporter domain maps to 363–597; that stretch reads ISFEEVEFSY…GGIYAGLVKA (235 aa). Residue 396–403 coordinates ATP; the sequence is GHTGSGKT.

It belongs to the ABC transporter superfamily.

Its subcellular location is the cell membrane. This is an uncharacterized protein from Bacillus subtilis (strain 168).